A 255-amino-acid polypeptide reads, in one-letter code: NAD kinase (255 aa).

Residue Asp44 is the Proton acceptor of the active site. NAD(+)-binding positions include 44 to 45, 114 to 115, Asp144, Ala152, and 155 to 160; these read DG, NE, and TAYNLS.

Belongs to the NAD kinase family. The cofactor is a divalent metal cation.

It localises to the cytoplasm. The enzyme catalyses NAD(+) + ATP = ADP + NADP(+) + H(+). In terms of biological role, involved in the regulation of the intracellular balance of NAD and NADP, and is a key enzyme in the biosynthesis of NADP. Catalyzes specifically the phosphorylation on 2'-hydroxyl of the adenosine moiety of NAD to yield NADP. The polypeptide is NAD kinase (Hyphomonas neptunium (strain ATCC 15444)).